Consider the following 100-residue polypeptide: Putative pterin-4-alpha-carbinolamine dehydratase (100 aa).

The protein belongs to the pterin-4-alpha-carbinolamine dehydratase family.

The catalysed reaction is (4aS,6R)-4a-hydroxy-L-erythro-5,6,7,8-tetrahydrobiopterin = (6R)-L-erythro-6,7-dihydrobiopterin + H2O. The polypeptide is Putative pterin-4-alpha-carbinolamine dehydratase (Rhodopseudomonas palustris (strain ATCC BAA-98 / CGA009)).